A 193-amino-acid chain; its full sequence is dCTP deaminase (193 aa).

DCTP contacts are provided by residues arginine 110–arginine 115, aspartate 128, valine 136–glutamate 138, tyrosine 171, lysine 178, and glutamine 182. The active-site Proton donor/acceptor is glutamate 138. A disordered region spans residues tyrosine 171 to aspartate 193.

This sequence belongs to the dCTP deaminase family. As to quaternary structure, homotrimer.

It catalyses the reaction dCTP + H2O + H(+) = dUTP + NH4(+). It participates in pyrimidine metabolism; dUMP biosynthesis; dUMP from dCTP (dUTP route): step 1/2. Functionally, catalyzes the deamination of dCTP to dUTP. The chain is dCTP deaminase from Hamiltonella defensa subsp. Acyrthosiphon pisum (strain 5AT).